The sequence spans 282 residues: DegV domain-containing protein SPy_0865/M5005_Spy0672 (282 aa).

The DegV domain occupies 3–280; the sequence is LAVITDSTAT…EGAIAFGVTP (278 aa). Hexadecanoate-binding residues include T61 and S94.

Functionally, may bind long-chain fatty acids, such as palmitate, and may play a role in lipid transport or fatty acid metabolism. This Streptococcus pyogenes serotype M1 protein is DegV domain-containing protein SPy_0865/M5005_Spy0672.